Reading from the N-terminus, the 198-residue chain is Holliday junction branch migration complex subunit RuvA (198 aa).

The tract at residues 1-63 (MIALLTGQIA…EDAIQLYGFR (63 aa)) is domain I. The interval 64–142 (TSLEKSFFQL…KLDLSSVVVP (79 aa)) is domain II. The segment at 143–153 (EPRQMPEDDLL) is flexible linker. The segment at 153–198 (LEDVVSALLNLGYKEPQVRKVLAGLNPGSDASLEGVLKQALKSLMR) is domain III.

It belongs to the RuvA family. As to quaternary structure, homotetramer. Forms an RuvA(8)-RuvB(12)-Holliday junction (HJ) complex. HJ DNA is sandwiched between 2 RuvA tetramers; dsDNA enters through RuvA and exits via RuvB. An RuvB hexamer assembles on each DNA strand where it exits the tetramer. Each RuvB hexamer is contacted by two RuvA subunits (via domain III) on 2 adjacent RuvB subunits; this complex drives branch migration. In the full resolvosome a probable DNA-RuvA(4)-RuvB(12)-RuvC(2) complex forms which resolves the HJ.

Its subcellular location is the cytoplasm. Its function is as follows. The RuvA-RuvB-RuvC complex processes Holliday junction (HJ) DNA during genetic recombination and DNA repair, while the RuvA-RuvB complex plays an important role in the rescue of blocked DNA replication forks via replication fork reversal (RFR). RuvA specifically binds to HJ cruciform DNA, conferring on it an open structure. The RuvB hexamer acts as an ATP-dependent pump, pulling dsDNA into and through the RuvAB complex. HJ branch migration allows RuvC to scan DNA until it finds its consensus sequence, where it cleaves and resolves the cruciform DNA. The sequence is that of Holliday junction branch migration complex subunit RuvA from Pelobacter propionicus (strain DSM 2379 / NBRC 103807 / OttBd1).